Consider the following 459-residue polypeptide: Nuclear distribution protein PAC1-2 (459 aa).

Positions 56-83 form a coiled coil; it reads TSIVRLQKKIMDLESRNAALQTELANLT. WD repeat units follow at residues 108-149, 151-191, 195-244, 246-284, 306-348, 350-389, 394-438, and 440-459; these read SHRD…RTVK, HTRA…KNIR, GHDH…KTLR, HTAW…SDHK, QYLA…LGTL, GHDN…KCVK, AHER…DTPD, and QVRC…VFAD.

Belongs to the WD repeat LIS1/nudF family. Self-associates. Interacts with NDL1 and dynein.

It localises to the cytoplasm. The protein resides in the cytoskeleton. Its subcellular location is the spindle pole. Positively regulates the activity of the minus-end directed microtubule motor protein dynein. May enhance dynein-mediated microtubule sliding by targeting dynein to the microtubule plus end. Required for nuclear migration during vegetative growth as well as development. Required for retrograde early endosome (EE) transport from the hyphal tip. Required for localization of dynein to the mitotic spindle poles. Recruits additional proteins to the dynein complex at SPBs. The sequence is that of Nuclear distribution protein PAC1-2 from Uncinocarpus reesii (strain UAMH 1704).